Reading from the N-terminus, the 140-residue chain is Vesicle transport protein GOT1 (140 aa).

4 helical membrane passes run 12-32 (IGLGLTGFGVFFTFLGVIFVF), 35-55 (GLIAMGNILFLAGVTLTIGIN), 71-91 (ISFGLGFLLVVFGWPIFGLLL), and 96-116 (FLVLFSGFWPTLAVFLQRIPL).

This sequence belongs to the GOT1 family. As to quaternary structure, homodimer. No interactions with STL1, STL2, CESA1, CESA3, CESA4, CESA6, CESA7 or CESA8.

The protein localises to the golgi apparatus membrane. Functionally, may be involved in fusion of ER-derived transport vesicles with the Golgi complex. This Arabidopsis thaliana (Mouse-ear cress) protein is Vesicle transport protein GOT1.